Here is a 247-residue protein sequence, read N- to C-terminus: PF03932 family protein CutC (247 aa).

The protein belongs to the CutC family.

Its subcellular location is the cytoplasm. The chain is PF03932 family protein CutC from Klebsiella pneumoniae subsp. pneumoniae (strain ATCC 700721 / MGH 78578).